A 439-amino-acid polypeptide reads, in one-letter code: Dolichyl-diphosphooligosaccharide--protein glycosyltransferase 48 kDa subunit (439 aa).

The first 25 residues, 1 to 25 (MELGAAARAWSLLWLLLPLLGLVGA), serve as a signal peptide directing secretion. Residues 27 to 410 (GPRTLVLLDN…YERFIPSAYP (384 aa)) are Lumenal-facing. Residues 411–430 (YYASAFSMMVGLFIFSVVFL) traverse the membrane as a helical segment. The Cytoplasmic segment spans residues 431 to 439 (HMKEKEKSD).

The protein belongs to the DDOST 48 kDa subunit family. As to quaternary structure, component of the oligosaccharyltransferase (OST) complex. OST exists in two different complex forms which contain common core subunits RPN1, RPN2, OST48, OST4, DAD1 and TMEM258, either STT3A or STT3B as catalytic subunits, and form-specific accessory subunits. STT3A complex assembly occurs through the formation of 3 subcomplexes. Subcomplex 1 contains RPN1 and TMEM258, subcomplex 2 contains the STT3A-specific subunits STT3A, DC2/OSTC, and KCP2 as well as the core subunit OST4, and subcomplex 3 contains RPN2, DAD1, and OST48. The STT3A complex can form stable complexes with the Sec61 complex or with both the Sec61 and TRAP complexes. Interacts with SMIM22.

The protein resides in the endoplasmic reticulum membrane. Its pathway is protein modification; protein glycosylation. Functionally, subunit of the oligosaccharyl transferase (OST) complex that catalyzes the initial transfer of a defined glycan (Glc(3)Man(9)GlcNAc(2) in eukaryotes) from the lipid carrier dolichol-pyrophosphate to an asparagine residue within an Asn-X-Ser/Thr consensus motif in nascent polypeptide chains, the first step in protein N-glycosylation. N-glycosylation occurs cotranslationally and the complex associates with the Sec61 complex at the channel-forming translocon complex that mediates protein translocation across the endoplasmic reticulum (ER). All subunits are required for a maximal enzyme activity. Required for the assembly of both SST3A- and SS3B-containing OST complexes. This Sus scrofa (Pig) protein is Dolichyl-diphosphooligosaccharide--protein glycosyltransferase 48 kDa subunit.